A 196-amino-acid polypeptide reads, in one-letter code: Venom platylysin (196 aa).

Belongs to the redulysin-like family. As to expression, expressed by the venom gland.

It localises to the secreted. Functionally, probable insecticidal toxin that has been detected in a semi-pure insecticidal fraction. The protein is Venom platylysin of Platymeris biguttatus (Two-spotted assassin bug).